We begin with the raw amino-acid sequence, 289 residues long: Probable aquaporin PIP2-6 (289 aa).

The residue at position 1 (Met1) is an N-acetylmethionine. At 1 to 38 (MTKDELTEEESLSGKDYLDPPPVKTFEVRELKKWSFYR) the chain is on the cytoplasmic side. Phosphothreonine is present on Thr7. The residue at position 11 (Ser11) is a Phosphoserine. Residues 39–59 (AVIAEFIATLLFLYVTVLTVI) traverse the membrane as a helical segment. The Extracellular portion of the chain corresponds to 60 to 80 (GFKSQTDINAGGGACASVGLL). A helical membrane pass occupies residues 81–101 (GISWAFGGMIFILVYCTAGIS). The Cytoplasmic portion of the chain corresponds to 102-124 (GGHINPAVTFGLFLASKVSLVRA). Residues 106–108 (NPA) carry the NPA 1 motif. The chain crosses the membrane as a helical span at residues 125-145 (VSYMVAQCLGATCGVGLVKVF). Residues 146–165 (QSTYYNRYGGGANMLSDGYN) are Extracellular-facing. The chain crosses the membrane as a helical span at residues 166–186 (VGVGVGAEIIGTFVLVYTVFS). Residues 187 to 200 (ATDPKRNARDSHIP) lie on the Cytoplasmic side of the membrane. The chain crosses the membrane as a helical span at residues 201–221 (VLAPLPIGFSVFMVHLATIPI). Residues 222–248 (TGTGINPARSFGAAVIYNNQKAWDDQW) are Extracellular-facing. Positions 227–229 (NPA) match the NPA 2 motif. A helical membrane pass occupies residues 249-269 (IFWVGPFVGAAIAAFYHQFVL). Residues 270-289 (RAGAMKAYGSVRSQLHELHA) are Cytoplasmic-facing. A phosphoserine mark is found at Ser279 and Ser282.

It belongs to the MIP/aquaporin (TC 1.A.8) family. PIP (TC 1.A.8.11) subfamily. Expressed above ground, and in flower buds.

It is found in the cell membrane. In terms of biological role, aquaporins facilitate the transport of water and small neutral solutes across cell membranes. This Arabidopsis thaliana (Mouse-ear cress) protein is Probable aquaporin PIP2-6 (PIP2-6).